Consider the following 202-residue polypeptide: Small ribosomal subunit protein uS4 (202 aa).

The 78-residue stretch at 91 to 168 folds into the S4 RNA-binding domain; it reads SMLSSVLYNS…QKVPDYLEVD (78 aa).

It belongs to the universal ribosomal protein uS4 family. Part of the 30S ribosomal subunit. Contacts protein S5. The interaction surface between S4 and S5 is involved in control of translational fidelity.

Functionally, one of the primary rRNA binding proteins, it binds directly to 16S rRNA where it nucleates assembly of the body of the 30S subunit. In terms of biological role, with S5 and S12 plays an important role in translational accuracy. In Ehrlichia ruminantium (strain Welgevonden), this protein is Small ribosomal subunit protein uS4.